Here is a 141-residue protein sequence, read N- to C-terminus: Hemoglobin subunit alpha-D (141 aa).

A Globin domain is found at 1–141 (MLSADEKQLI…VSDVLAEKYR (141 aa)). Heme b-binding residues include His58 and His87.

Belongs to the globin family. As to quaternary structure, heterotetramer of two alpha-D chains and two beta chains. In terms of tissue distribution, red blood cells.

Involved in oxygen transport from the lung to the various peripheral tissues. The chain is Hemoglobin subunit alpha-D (HBAD) from Phrynops hilarii (Snake-necked turtle).